We begin with the raw amino-acid sequence, 75 residues long: Small ribosomal subunit protein bS18c (75 aa).

It belongs to the bacterial ribosomal protein bS18 family. As to quaternary structure, part of the 30S ribosomal subunit.

The protein resides in the plastid. It is found in the chloroplast. In Marchantia polymorpha (Common liverwort), this protein is Small ribosomal subunit protein bS18c (rps18).